Reading from the N-terminus, the 143-residue chain is WW domain-containing protein C660.05 (143 aa).

A WW domain is found at 9-44 (GLPAGWVAQWDPTYQAYFYINETFEGAQPQWEPPIP). The segment at 115-143 (HHGPLHGPHGGFGGRGGGRMGGRGGRGRR) is disordered.

The chain is WW domain-containing protein C660.05 from Schizosaccharomyces pombe (strain 972 / ATCC 24843) (Fission yeast).